A 272-amino-acid chain; its full sequence is Orotidine 5'-phosphate decarboxylase (272 aa).

Catalysis depends on Lys93, which acts as the Proton donor.

It belongs to the OMP decarboxylase family. Type 2 subfamily.

It catalyses the reaction orotidine 5'-phosphate + H(+) = UMP + CO2. It functions in the pathway pyrimidine metabolism; UMP biosynthesis via de novo pathway; UMP from orotate: step 2/2. The protein is Orotidine 5'-phosphate decarboxylase of Roseiflexus sp. (strain RS-1).